The following is a 1144-amino-acid chain: PAN2-PAN3 deadenylation complex catalytic subunit PAN2 (1144 aa).

4 WD repeats span residues 27-66, 153-193, 196-233, and 302-341; these read KKEKQVTKVVFDTEANLIWAGDSYGRVSSYDPTYSLYTRH, SSTY…VIHS, GHSASITSMDFKDNTLVTAGKSKTFGYLQSDQFINVYD, and HPCKSISQFTLSPSGDYLAFLEEESMINMWNRSNSMSGFT. Residues 344 to 481 form a linker region; sequence AAVLEYQDYP…LLEYKPSNNI (138 aa). The USP domain occupies 482 to 887; it reads DIPPAYSKLQ…TPEIVVYSDA (406 aa). In terms of domain architecture, Exonuclease spans 939-1110; the sequence is VALDAEFVSL…EDAHTALLLY (172 aa). A divalent metal cation contacts are provided by aspartate 942, glutamate 944, aspartate 1051, and aspartate 1102.

This sequence belongs to the peptidase C19 family. PAN2 subfamily. In terms of assembly, forms a heterotrimer with an asymmetric homodimer of the regulatory subunit PAN3 to form the poly(A)-nuclease (PAN) deadenylation complex. The cofactor is a divalent metal cation.

It is found in the cytoplasm. It carries out the reaction Exonucleolytic cleavage of poly(A) to 5'-AMP.. Its activity is regulated as follows. Positively regulated by the regulatory subunit PAN3. Catalytic subunit of the poly(A)-nuclease (PAN) deadenylation complex, one of two cytoplasmic mRNA deadenylases involved in mRNA turnover. PAN specifically shortens poly(A) tails of RNA and the activity is stimulated by poly(A)-binding protein PAB1. PAN deadenylation is followed by rapid degradation of the shortened mRNA tails by the CCR4-NOT complex. Deadenylated mRNAs are then degraded by two alternative mechanisms, namely exosome-mediated 3'-5' exonucleolytic degradation, or deadenylation-dependent mRNA decaping and subsequent 5'-3' exonucleolytic degradation by XRN1. May also be involved in post-transcriptional maturation of mRNA poly(A) tails. The chain is PAN2-PAN3 deadenylation complex catalytic subunit PAN2 from Kluyveromyces lactis (strain ATCC 8585 / CBS 2359 / DSM 70799 / NBRC 1267 / NRRL Y-1140 / WM37) (Yeast).